Here is a 157-residue protein sequence, read N- to C-terminus: Ribosomal RNA large subunit methyltransferase H (157 aa).

S-adenosyl-L-methionine-binding positions include Leu-73, Gly-105, and 124 to 129 (LSLMTF).

This sequence belongs to the RNA methyltransferase RlmH family. Homodimer.

It localises to the cytoplasm. The catalysed reaction is pseudouridine(1915) in 23S rRNA + S-adenosyl-L-methionine = N(3)-methylpseudouridine(1915) in 23S rRNA + S-adenosyl-L-homocysteine + H(+). Its function is as follows. Specifically methylates the pseudouridine at position 1915 (m3Psi1915) in 23S rRNA. The chain is Ribosomal RNA large subunit methyltransferase H from Flavobacterium johnsoniae (strain ATCC 17061 / DSM 2064 / JCM 8514 / BCRC 14874 / CCUG 350202 / NBRC 14942 / NCIMB 11054 / UW101) (Cytophaga johnsonae).